The chain runs to 342 residues: N-acetyl-gamma-glutamyl-phosphate reductase (342 aa).

The active site involves cysteine 149.

The protein belongs to the NAGSA dehydrogenase family. Type 1 subfamily.

It localises to the cytoplasm. It catalyses the reaction N-acetyl-L-glutamate 5-semialdehyde + phosphate + NADP(+) = N-acetyl-L-glutamyl 5-phosphate + NADPH + H(+). It functions in the pathway amino-acid biosynthesis; L-arginine biosynthesis; N(2)-acetyl-L-ornithine from L-glutamate: step 3/4. Its function is as follows. Catalyzes the NADPH-dependent reduction of N-acetyl-5-glutamyl phosphate to yield N-acetyl-L-glutamate 5-semialdehyde. This Ruegeria pomeroyi (strain ATCC 700808 / DSM 15171 / DSS-3) (Silicibacter pomeroyi) protein is N-acetyl-gamma-glutamyl-phosphate reductase.